The chain runs to 202 residues: Casparian strip membrane protein 1 (202 aa).

Residues 1-42 (MEKNKSTAIEIAESSKESKGKAPLLAAAVGHDRAAGYKRGVS) lie on the Cytoplasmic side of the membrane. The chain crosses the membrane as a helical span at residues 43 to 63 (IFDLFLRISAATAALAATIVM). At 64–90 (GTTEQTLPFFTQFFQFRAQYDDLPTFT) the chain is on the extracellular side. The chain crosses the membrane as a helical span at residues 91–111 (FFVVGMAIVTGYLILSVPFSI). At 112–130 (VCIARPVAIGPRFLLIVGD) the chain is on the cytoplasmic side. A helical transmembrane segment spans residues 131–151 (TLKAVLATSAAGSSAAIVYLA). Residues 152–173 (HNGNSDANWLDICQQFNDFCQR) lie on the Extracellular side of the membrane. A helical membrane pass occupies residues 174 to 194 (VSGAVVAAFVAVVLLIFLIVL). Residues 195-202 (SAMALRKN) are Cytoplasmic-facing.

It belongs to the Casparian strip membrane proteins (CASP) family. Homodimer and heterodimers.

Its subcellular location is the cell membrane. Its function is as follows. Regulates membrane-cell wall junctions and localized cell wall deposition. Required for establishment of the Casparian strip membrane domain (CSD) and the subsequent formation of Casparian strips, a cell wall modification of the root endodermis that determines an apoplastic barrier between the intraorganismal apoplasm and the extraorganismal apoplasm and prevents lateral diffusion. The protein is Casparian strip membrane protein 1 of Striga hermonthica (Purple witchweed).